The chain runs to 337 residues: Arylacetonitrilase (337 aa).

A CN hydrolase domain is found at 7 to 278; sequence VRVAVTQHEP…EGFVYADLDL (272 aa). The active-site Proton acceptor is E47. The active site involves K127. C162 serves as the catalytic Nucleophile. Positions 311-337 are disordered; the sequence is QHRPEGQADNAAYGLDVPSGLVEEEGA.

Belongs to the carbon-nitrogen hydrolase superfamily. Nitrilase family.

It carries out the reaction a nitrile + 2 H2O = a carboxylate + NH4(+). The catalysed reaction is 4-chlorophenylacetonitrile + 2 H2O = 4-chlorophenylacetate + NH4(+). Its function is as follows. Nitrilase that hydrolyzes preferentially phenylacetonitrile, but also (R,S)-mandelonitrile, and 2-phenylpropionitrile. This chain is Arylacetonitrilase, found in Aspergillus niger (strain ATCC MYA-4892 / CBS 513.88 / FGSC A1513).